We begin with the raw amino-acid sequence, 353 residues long: MSRFWTDKIASLDPYVPGEQPQDKKYIKLNTNESPYSPSPKAIEAMALEVSERLRLYPDPNCATLKNALAKSYQLDANQVFVGNGSDEVLALAFMGYFAGGKPLAFADITYSFYKVYAGLYSIEPKLIPLNDDFDIIPADYENLDVSGVVITNPNAPTGKALPLADIEAILKANPDVVVLVDEAYVDFGAQSAVSLINQYPNLLVVQTLSKSRALAGIRVGYALGHADLIEGLERLKNSFNSYPIDRVALVGATAAVEDEAYLKEICDKTIATREQSVKDLEALGFSIIPSATNFVFATHPEKNAEQIYLTLKERGILVRFFGSNKPRIGNYLRITIGTDEEMAALTAALKTL.

K211 bears the N6-(pyridoxal phosphate)lysine mark.

Belongs to the class-II pyridoxal-phosphate-dependent aminotransferase family. Histidinol-phosphate aminotransferase subfamily. In terms of assembly, homodimer. Pyridoxal 5'-phosphate serves as cofactor.

The catalysed reaction is L-histidinol phosphate + 2-oxoglutarate = 3-(imidazol-4-yl)-2-oxopropyl phosphate + L-glutamate. Its pathway is amino-acid biosynthesis; L-histidine biosynthesis; L-histidine from 5-phospho-alpha-D-ribose 1-diphosphate: step 7/9. This Marinomonas sp. (strain MWYL1) protein is Histidinol-phosphate aminotransferase.